The sequence spans 152 residues: Vasotocin-neurophysin VT 1 (152 aa).

Positions 1 to 19 (MSDSFLPTCILCLLALSSA) are cleaved as a signal peptide. Cys20 and Cys25 are joined by a disulfide. At Gly28 the chain carries Glycine amide. Disulfide bonds link Cys40/Cys84, Cys43/Cys57, Cys51/Cys74, Cys58/Cys64, Cys91/Cys103, Cys97/Cys115, and Cys104/Cys109.

This sequence belongs to the vasopressin/oxytocin family.

The protein localises to the secreted. Functionally, vasotocin is an antidiuretic hormone. This Catostomus commersonii (White sucker) protein is Vasotocin-neurophysin VT 1.